A 175-amino-acid chain; its full sequence is Small ribosomal subunit protein uS5 (175 aa).

The 64-residue stretch at Trp19–Ile82 folds into the S5 DRBM domain.

The protein belongs to the universal ribosomal protein uS5 family. As to quaternary structure, part of the 30S ribosomal subunit. Contacts proteins S4 and S8.

With S4 and S12 plays an important role in translational accuracy. In terms of biological role, located at the back of the 30S subunit body where it stabilizes the conformation of the head with respect to the body. The protein is Small ribosomal subunit protein uS5 of Nostoc punctiforme (strain ATCC 29133 / PCC 73102).